The primary structure comprises 260 residues: ATP-dependent zinc metalloprotease FTSH, chloroplastic (260 aa).

Histidine 219 is a Zn(2+) binding site. Glutamate 220 is an active-site residue. Position 223 (histidine 223) interacts with Zn(2+).

In the N-terminal section; belongs to the AAA ATPase family. This sequence in the C-terminal section; belongs to the peptidase M41 family. Zn(2+) is required as a cofactor.

It is found in the plastid. Its subcellular location is the chloroplast thylakoid membrane. Functionally, probable ATP-dependent zinc metallopeptidase. The chain is ATP-dependent zinc metalloprotease FTSH, chloroplastic from Helianthus annuus (Common sunflower).